We begin with the raw amino-acid sequence, 166 residues long: uncharacterized protein (166 aa).

This is an uncharacterized protein from Acidianus hospitalis (AFV-1).